We begin with the raw amino-acid sequence, 1504 residues long: DNA-directed RNA polymerase subunit beta' (1504 aa).

Residues Cys60, Cys62, Cys75, and Cys78 each coordinate Zn(2+). Residues 265-294 are disordered; it reads RKQRDLEDAEQLTGAERERKEYEASQERER. Positions 279–294 are enriched in basic and acidic residues; the sequence is AERERKEYEASQERER. Mg(2+) contacts are provided by Asp626, Asp628, and Asp630. Cys1002, Cys1075, Cys1082, and Cys1085 together coordinate Zn(2+). The tract at residues 1468 to 1504 is disordered; the sequence is RALIGGDGDDGERNNGDFDDQVGEDVVIPPDDDDQEA.

This sequence belongs to the RNA polymerase beta' chain family. The RNAP catalytic core consists of 2 alpha, 1 beta, 1 beta' and 1 omega subunit. When a sigma factor is associated with the core the holoenzyme is formed, which can initiate transcription. It depends on Mg(2+) as a cofactor. The cofactor is Zn(2+).

It carries out the reaction RNA(n) + a ribonucleoside 5'-triphosphate = RNA(n+1) + diphosphate. DNA-dependent RNA polymerase catalyzes the transcription of DNA into RNA using the four ribonucleoside triphosphates as substrates. This chain is DNA-directed RNA polymerase subunit beta', found in Roseiflexus sp. (strain RS-1).